A 347-amino-acid polypeptide reads, in one-letter code: Adenine deaminase (347 aa).

The Zn(2+) site is built by His-16, His-18, and His-204. Catalysis depends on Glu-207, which acts as the Proton donor. Position 285 (Asp-285) interacts with Zn(2+). Residue Asp-286 coordinates substrate.

It belongs to the metallo-dependent hydrolases superfamily. Adenosine and AMP deaminases family. Adenine deaminase type 2 subfamily. Zn(2+) is required as a cofactor.

The protein localises to the cytoplasm. It localises to the nucleus. The catalysed reaction is adenine + H2O + H(+) = hypoxanthine + NH4(+). Functionally, catalyzes the hydrolytic deamination of adenine to hypoxanthine. Plays an important role in the purine salvage pathway and in nitrogen catabolism. This chain is Adenine deaminase, found in Candida glabrata (strain ATCC 2001 / BCRC 20586 / JCM 3761 / NBRC 0622 / NRRL Y-65 / CBS 138) (Yeast).